Consider the following 193-residue polypeptide: Iron-sulfur flavoprotein MJ1083 (193 aa).

4 residues coordinate [4Fe-4S] cluster: Cys47, Cys50, Cys53, and Cys59.

The protein belongs to the SsuE family. Isf subfamily. As to quaternary structure, homodimer. FMN is required as a cofactor. [4Fe-4S] cluster serves as cofactor.

In terms of biological role, redox-active protein probably involved in electron transport. The sequence is that of Iron-sulfur flavoprotein MJ1083 from Methanocaldococcus jannaschii (strain ATCC 43067 / DSM 2661 / JAL-1 / JCM 10045 / NBRC 100440) (Methanococcus jannaschii).